A 475-amino-acid polypeptide reads, in one-letter code: Nucleoporin-like protein amo1 (475 aa).

A C3H1-type zinc finger spans residues 1 to 25 (MVVCKYFLQNRCRYGTNCKNQHTVP). Polar residues predominate over residues 165–182 (DKSTSNSTVTSNQFNKPT). Disordered stretches follow at residues 165 to 208 (DKST…DIFG) and 220 to 252 (NASP…SSFG). The span at 183-204 (QNSPFNSFSNNNNSFNNNQQAN) shows a compositional bias: low complexity. The span at 220 to 242 (NASPFSQNTSSNSFTGSNPVQNN) shows a compositional bias: polar residues. The segment covering 243–252 (PSSFGSSSFG) has biased composition (low complexity).

The protein resides in the nucleus. Involved in the cell polarity process where it is required for the correct termination of microtubule growth at the cell ends during interphase. The sequence is that of Nucleoporin-like protein amo1 (amo1) from Schizosaccharomyces pombe (strain 972 / ATCC 24843) (Fission yeast).